The sequence spans 419 residues: D-amino acid dehydrogenase (419 aa).

3-17 (VLILGSGVVGVTSAY) contributes to the FAD binding site.

This sequence belongs to the DadA oxidoreductase family. FAD serves as cofactor.

It catalyses the reaction a D-alpha-amino acid + A + H2O = a 2-oxocarboxylate + AH2 + NH4(+). It functions in the pathway amino-acid degradation; D-alanine degradation; NH(3) and pyruvate from D-alanine: step 1/1. Functionally, oxidative deamination of D-amino acids. This is D-amino acid dehydrogenase from Chromohalobacter salexigens (strain ATCC BAA-138 / DSM 3043 / CIP 106854 / NCIMB 13768 / 1H11).